Here is a 159-residue protein sequence, read N- to C-terminus: Large ribosomal subunit protein uL22 (159 aa).

The protein belongs to the universal ribosomal protein uL22 family. As to quaternary structure, part of the 50S ribosomal subunit.

Its function is as follows. This protein binds specifically to 23S rRNA; its binding is stimulated by other ribosomal proteins, e.g. L4, L17, and L20. It is important during the early stages of 50S assembly. It makes multiple contacts with different domains of the 23S rRNA in the assembled 50S subunit and ribosome. In terms of biological role, the globular domain of the protein is located near the polypeptide exit tunnel on the outside of the subunit, while an extended beta-hairpin is found that lines the wall of the exit tunnel in the center of the 70S ribosome. This Thermotoga sp. (strain RQ2) protein is Large ribosomal subunit protein uL22.